The sequence spans 87 residues: Small ribosomal subunit protein bS20 (87 aa).

A disordered region spans residues 1–22; it reads MANIKSQIKRIGTNKKAQERNK.

It belongs to the bacterial ribosomal protein bS20 family.

In terms of biological role, binds directly to 16S ribosomal RNA. In Clavibacter michiganensis subsp. michiganensis (strain NCPPB 382), this protein is Small ribosomal subunit protein bS20.